Reading from the N-terminus, the 178-residue chain is Tetratricopeptide repeat protein 9C (178 aa).

TPR repeat units follow at residues 15–48 (ASSFKSQGNKCYTEHRMRQAVSLYHKALLQLRSL), 79–114 (ADCYNNLAACLLQSQPPRYQRVYECSLQVLSLQPEN), and 115–148 (VKALYRAGVSSYHLKDYTNAHHYLSQAASRAPKD).

Belongs to the TTC9 family.

This Xenopus tropicalis (Western clawed frog) protein is Tetratricopeptide repeat protein 9C (ttc9c).